Reading from the N-terminus, the 208-residue chain is N-(5'-phosphoribosyl)anthranilate isomerase (208 aa).

It belongs to the TrpF family.

The enzyme catalyses N-(5-phospho-beta-D-ribosyl)anthranilate = 1-(2-carboxyphenylamino)-1-deoxy-D-ribulose 5-phosphate. The protein operates within amino-acid biosynthesis; L-tryptophan biosynthesis; L-tryptophan from chorismate: step 3/5. The sequence is that of N-(5'-phosphoribosyl)anthranilate isomerase from Neisseria meningitidis serogroup A / serotype 4A (strain DSM 15465 / Z2491).